A 708-amino-acid polypeptide reads, in one-letter code: MEANHQRNDLGLVALTMLAQYHNISLNPEEIKHKFDLDGKGLSLTSWLLAAKSLALKAKHIKKEISRLHLVNLPALVWQDNGKHFLLVKVDTDNNRYLTYNLEQDAPQILSQDEFEACYQGQLILVTSRASVVGQLAKFDFTWFIPAVIKYRKIFLETLIVSIFLQIFALITPLFFQVVMDKVLVHRGFSTLNIITVALAIVIIFEIVLSGLRTYVFSHSTSRIDVELGAKLFRHLLSLPISYFENRRVGDTVARVRELDQIRNFLTGQALTSVLDLLFSFIFFAVMWYYSPKLTLVILGSLPCYILWSIFISPILRRRLDDKFARSADNQAFLVESVTAINMIKAMAVAPQMTDTWDKQLASYVSSSFRVTVLATIGQQGVQLIQKTVMVINLWLGAHLVISGDLSIGQLIAFNMLSGQVIAPVIRLAQLWQDFQQVGISVTRLGDVLNSPTEQYQGKLSLPEIKGYISFKNIRFRYKPDAPTILNNVNLEIRQGEVIGIVGRSGSGKSTLTKLLQRFYIPENGQVLIDGHDLALADPNWLRRQIGVVLQDNVLLNRSIRENIALSDPGMPMERVIYAAKLAGAHDFISELREGYNTIVGEQGAGLSGGQRQRIAIARALVNNPKILIFDEATSALDYESEHIIMQNMQKICQGRTVILIAHRLSTVKNADRIIVMEKGEIVEQGKHHELLQNSNGLYSYLHQLQLN.

In terms of domain architecture, Peptidase C39 spans 1–126 (MEANHQRNDL…ACYQGQLILV (126 aa)). One can recognise an ABC transmembrane type-1 domain in the interval 155 to 437 (FLETLIVSIF…LAQLWQDFQQ (283 aa)). Helical transmembrane passes span 159 to 179 (LIVSIFLQIFALITPLFFQVV), 192 to 212 (LNIITVALAIVIIFEIVLSGL), 270 to 290 (ALTSVLDLLFSFIFFAVMWYY), 296 to 316 (LVILGSLPCYILWSIFISPIL), and 389 to 409 (VMVINLWLGAHLVISGDLSIG). The ABC transporter domain occupies 469–704 (ISFKNIRFRY…SNGLYSYLHQ (236 aa)). 503 to 510 (GRSGSGKS) contacts ATP.

The protein belongs to the ABC transporter superfamily. Protein-1 exporter (TC 3.A.1.109) family. As to quaternary structure, homodimer.

Its subcellular location is the cell inner membrane. It carries out the reaction ATP + H2O + proteinSide 1 = ADP + phosphate + proteinSide 2.. In terms of biological role, part of the ABC transporter complex LktBD involved in leukotoxin export. Transmembrane domains (TMD) form a pore in the inner membrane and the ATP-binding domain (NBD) is responsible for energy generation. This chain is Leukotoxin translocation ATP-binding protein LktB (lktB), found in Mannheimia haemolytica (Pasteurella haemolytica).